Consider the following 122-residue polypeptide: MRKSYRVKSEKDFQQVFESGNSVANRAFVIYKVEKPENKHFRVGISVGKKVGHTAVARNRLKRYIRAVIDEEKLEIDPQVDFLIITRPYARNFDMVKVRKNLLHALALAHIIEEMPDEVEEN.

The protein belongs to the RnpA family. Consists of a catalytic RNA component (M1 or rnpB) and a protein subunit.

The catalysed reaction is Endonucleolytic cleavage of RNA, removing 5'-extranucleotides from tRNA precursor.. RNaseP catalyzes the removal of the 5'-leader sequence from pre-tRNA to produce the mature 5'-terminus. It can also cleave other RNA substrates such as 4.5S RNA. The protein component plays an auxiliary but essential role in vivo by binding to the 5'-leader sequence and broadening the substrate specificity of the ribozyme. The sequence is that of Ribonuclease P protein component from Lactobacillus helveticus (strain DPC 4571).